We begin with the raw amino-acid sequence, 241 residues long: ATP-dependent Clp protease ATP-binding subunit CLPT2, chloroplastic (241 aa).

The transit peptide at Met-1–Ser-75 directs the protein to the chloroplast. The Clp R domain occupies Lys-91–Gly-237. Repeat regions lie at residues Trp-94 to Ala-159 and Leu-171 to Gly-237.

This sequence belongs to the ClpA/ClpB family. Monomer and homodimer. The dimers monomerize before association to the P-ring. Component of the chloroplastic Clp protease core complex which consist of at least 16 proteins: CLPP4 (3 copies), CLPP5 (3 copies), CLPR4 (2 copies), ClpP1 (1 copy), CLPP6 (1 copy), CLPR2 (1 copy), CLPT1 (1 copy), CLPT2 (1 copy) and 3 copies of CLPP3 and/or CLPR1 and/or CLPR3. Interacts with AHK2. Interacts with CPN21. No interactions with CLPS1.

It is found in the plastid. It localises to the chloroplast. Accessory protein regulating the assembly of the plastidial Clp protease system. CLPT1 first binds to the heptameric P-ring containing the CLP3-6 subunits followed by CLPT2, and only then does the P-ring combine with the R-ring composed of the clpP1 and CLPR1-4 subunits. Once the core complex is fully assembled, it then associates to the CLPC chaperone partner to form the functional protease. CLPT2 and CLPT1 are partially redundant. This Arabidopsis thaliana (Mouse-ear cress) protein is ATP-dependent Clp protease ATP-binding subunit CLPT2, chloroplastic.